We begin with the raw amino-acid sequence, 163 residues long: Neurotrophin-3 (163 aa).

Positions 1-3 (IQS) are cleaved as a signal peptide. Positions 4–119 (TSMDQGILTE…VLNRTSRRKR (116 aa)) are excised as a propeptide. N-linked (GlcNAc...) asparagine glycosylation occurs at Asn-112.

This sequence belongs to the NGF-beta family.

The protein resides in the secreted. Seems to promote the survival of visceral and proprioceptive sensory neurons. In Eryx conicus (Rough-scaled sand boa), this protein is Neurotrophin-3 (NTF3).